We begin with the raw amino-acid sequence, 98 residues long: Cell division topological specificity factor (98 aa).

This sequence belongs to the MinE family.

Prevents the cell division inhibition by proteins MinC and MinD at internal division sites while permitting inhibition at polar sites. This ensures cell division at the proper site by restricting the formation of a division septum at the midpoint of the long axis of the cell. In Moorella thermoacetica (strain ATCC 39073 / JCM 9320), this protein is Cell division topological specificity factor.